Reading from the N-terminus, the 25-residue chain is Xenoposin precursor fragment BM1 (25 aa).

In terms of tissue distribution, expressed by the skin glands.

The protein resides in the secreted. Its function is as follows. Antimicrobial peptide. This is Xenoposin precursor fragment BM1 from Xenopus boumbaensis (Mawa clawed frog).